Reading from the N-terminus, the 271-residue chain is Bis(5'-nucleosyl)-tetraphosphatase, symmetrical (271 aa).

Belongs to the Ap4A hydrolase family.

The enzyme catalyses P(1),P(4)-bis(5'-adenosyl) tetraphosphate + H2O = 2 ADP + 2 H(+). Hydrolyzes diadenosine 5',5'''-P1,P4-tetraphosphate to yield ADP. The polypeptide is Bis(5'-nucleosyl)-tetraphosphatase, symmetrical (Aliivibrio fischeri (strain MJ11) (Vibrio fischeri)).